Here is a 592-residue protein sequence, read N- to C-terminus: Bifunctional purine biosynthesis protein ATIC (592 aa).

The residue at position 1 (methionine 1) is an N-acetylmethionine. The region spanning 1–146 (MAPSQLALFS…KNHARVTVVC (146 aa)) is the MGS-like domain. Residues 1–198 (MAPSQLALFS…ISDYFRKQYS (198 aa)) form an IMP cyclohydrolase region. Residues 12-14 (SDK), 34-37 (SGGT), 64-67 (RVKT), 101-102 (CN), and 125-126 (DI) contribute to the IMP site. Lysine 137 acts as the Proton donor/acceptor; for FAICAR cyclization activity in catalysis. At lysine 199 the chain carries N6-acetyllysine. Residues 199–592 (KGISQMPLRY…AHTDLRLFHH (394 aa)) are AICAR formyltransferase. 5-amino-1-(5-phospho-beta-D-ribosyl)imidazole-4-carboxamide-binding positions include 207-208 (RY), histidine 267, glycine 316, aspartate 339, asparagine 431, and arginine 451. The active-site Proton acceptor; for AICAR formyltransferase activity is histidine 267. Isoleucine 452 serves as a coordination point for (6R)-10-formyltetrahydrofolate. Residue phenylalanine 541 participates in 5-amino-1-(5-phospho-beta-D-ribosyl)imidazole-4-carboxamide binding. Residues aspartate 546 and 565–566 (ST) each bind (6R)-10-formyltetrahydrofolate. Arginine 588 is a 5-amino-1-(5-phospho-beta-D-ribosyl)imidazole-4-carboxamide binding site.

The protein belongs to the PurH family. In terms of assembly, homodimer. Associates with internalized INSR complexes on Golgi/endosomal membranes. Interacts with INSR; ATIC together with PRKAA2/AMPK2 and HACD3/PTPLAD1 is proposed to be part of a signaling network regulating INSR autophosphorylation and endocytosis.

It localises to the cytoplasm. It is found in the cytosol. It catalyses the reaction (6R)-10-formyltetrahydrofolate + 5-amino-1-(5-phospho-beta-D-ribosyl)imidazole-4-carboxamide = 5-formamido-1-(5-phospho-D-ribosyl)imidazole-4-carboxamide + (6S)-5,6,7,8-tetrahydrofolate. The enzyme catalyses 10-formyldihydrofolate + 5-amino-1-(5-phospho-beta-D-ribosyl)imidazole-4-carboxamide = 5-formamido-1-(5-phospho-D-ribosyl)imidazole-4-carboxamide + 7,8-dihydrofolate. It carries out the reaction IMP + H2O = 5-formamido-1-(5-phospho-D-ribosyl)imidazole-4-carboxamide. It functions in the pathway purine metabolism; IMP biosynthesis via de novo pathway; 5-formamido-1-(5-phospho-D-ribosyl)imidazole-4-carboxamide from 5-amino-1-(5-phospho-D-ribosyl)imidazole-4-carboxamide (10-formyl THF route): step 1/1. The protein operates within purine metabolism; IMP biosynthesis via de novo pathway; IMP from 5-formamido-1-(5-phospho-D-ribosyl)imidazole-4-carboxamide: step 1/1. With respect to regulation, AMP and XMP inhibit AICAR formyltransferase activity. AICAR formyltransferase activity is inhibited by N-(6-fluoro-1-oxo-1,2-dihydroisoquinolin-7-yl)-5- [(3R)-3-hydroxypyrrolidin-1-yl]thiophene-2-sulfonamide (LSN 3213128), which acts as a tumor suppression in cancer cell lines. Functionally, bifunctional enzyme that catalyzes the last two steps of purine biosynthesis. Acts as a transformylase that incorporates a formyl group to the AMP analog AICAR (5-amino-1-(5-phospho-beta-D-ribosyl)imidazole-4-carboxamide) to produce the intermediate formyl-AICAR (FAICAR). Also displays cyclohydrolase activity involving the cyclization of FAICAR to inosine monophosphate (IMP). Can use both 10-formyldihydrofolate and 10-formyltetrahydrofolate as the formyl donor in this reaction. Also catalyzes the cyclization of FAICAR to IMP. Promotes insulin receptor/INSR autophosphorylation and is involved in INSR internalization. The protein is Bifunctional purine biosynthesis protein ATIC (Atic) of Mus musculus (Mouse).